Reading from the N-terminus, the 416-residue chain is Serine/threonine-protein kinase 26 (416 aa).

Position 2 is an N-acetylalanine (A2). S4 is subject to Phosphoserine. The 251-residue stretch at 24–274 (FTKLERIGKG…AKELLKHKFI (251 aa)) folds into the Protein kinase domain. ATP contacts are provided by residues 30-38 (IGKGSFGEV) and K53. D144 functions as the Proton acceptor in the catalytic mechanism. Position 178 is a phosphothreonine; by autocatalysis (T178). The interval 297 to 340 (EGHSDDESDSEGSDSESTSRENNTHPEWSFTTVRKKPDPKKVQN) is disordered. A phosphoserine mark is found at S300, S304, S306, S309, and S325. Residues T327 and T328 each carry the phosphothreonine modification.

Belongs to the protein kinase superfamily. STE Ser/Thr protein kinase family. STE20 subfamily. In terms of assembly, homodimer. Interacts with PDCD10. Interacts with GOLGA2. Interacts with CTTNBP2NL. Interacts with RIPOR1 (via C-terminus); this interaction occurs in a PDCD10-dependent and Rho-independent manner. Interacts with PDCD10; this interaction is required for the association of STK26 with RIPOR1. Part of the core of STRIPAK complexes composed of PP2A catalytic and scaffolding subunits, the striatins (PP2A regulatory subunits), the striatin-associated proteins MOB4, STRIP1 and STRIP2, PDCD10 and members of the STE20 kinases, such as STK24 and STK26. It depends on Mg(2+) as a cofactor.

Its subcellular location is the cytoplasm. The protein localises to the golgi apparatus. It carries out the reaction L-seryl-[protein] + ATP = O-phospho-L-seryl-[protein] + ADP + H(+). It catalyses the reaction L-threonyl-[protein] + ATP = O-phospho-L-threonyl-[protein] + ADP + H(+). Its activity is regulated as follows. Interaction with Golgi matrix protein GOLGA2 leads to autophosphorylation on Thr-178, possibly as a consequence of stabilization of dimer formation. May also be activated by C-terminal cleavage. Its function is as follows. Serine/threonine-protein kinase that acts as a mediator of cell growth. Modulates apoptosis. In association with STK24 negatively regulates Golgi reorientation in polarized cell migration upon RHO activation. Phosphorylates ATG4B at 'Ser-383', thereby increasing autophagic flux. Part of the striatin-interacting phosphatase and kinase (STRIPAK) complexes. STRIPAK complexes have critical roles in protein (de)phosphorylation and are regulators of multiple signaling pathways including Hippo, MAPK, nuclear receptor and cytoskeleton remodeling. Different types of STRIPAK complexes are involved in a variety of biological processes such as cell growth, differentiation, apoptosis, metabolism and immune regulation. This chain is Serine/threonine-protein kinase 26, found in Homo sapiens (Human).